Here is a 60-residue protein sequence, read N- to C-terminus: Large ribosomal subunit protein uL30 (60 aa).

This sequence belongs to the universal ribosomal protein uL30 family. As to quaternary structure, part of the 50S ribosomal subunit.

This Streptomyces avermitilis (strain ATCC 31267 / DSM 46492 / JCM 5070 / NBRC 14893 / NCIMB 12804 / NRRL 8165 / MA-4680) protein is Large ribosomal subunit protein uL30.